Reading from the N-terminus, the 80-residue chain is Pancreatic polypeptide (80 aa).

An N-terminal signal peptide occupies residues 1 to 25; the sequence is MPPRWASLLLLACSLLLLAVPPGTA. Tyr-61 bears the Tyrosine amide mark. A propeptide spanning residues 65 to 80 is cleaved from the precursor; the sequence is SSSRVLCEEPMGAAGC.

Belongs to the NPY family.

The protein localises to the secreted. Hormone secreted by pancreatic cells that acts as a regulator of pancreatic and gastrointestinal functions. The protein is Pancreatic polypeptide (PPY) of Gallus gallus (Chicken).